The primary structure comprises 579 residues: Adenine/guanine permease AZG1 (579 aa).

The next 12 membrane-spanning stretches (helical) occupy residues 52–72 (AGTA…SILS), 131–151 (LIVA…LMAN), 183–203 (TALA…AIGF), 221–241 (AGIG…IGLV), 260–280 (ISLA…AGGS), 292–312 (MESP…YCLV), 320–340 (IYGI…VTAF), 379–399 (FWEA…GTLY), 414–434 (FAGQ…GSLL), 459–479 (AITV…LASI), 480–500 (PAWA…KSVT), and 514–534 (FVTM…IGGI).

Belongs to the nucleobase:cation symporter-2 (NCS2) (TC 2.A.40) family. Azg-like subfamily.

It is found in the membrane. Its function is as follows. Transports natural purines (adenine and guanine) as well as purine analogs. Confers sensitivity to 8-azaadenine and 8-azaguanine (8-azg). The chain is Adenine/guanine permease AZG1 (AZG1) from Arabidopsis thaliana (Mouse-ear cress).